The sequence spans 411 residues: 1-deoxy-D-xylulose 5-phosphate reductoisomerase (411 aa).

NADPH-binding residues include T23, G24, S25, I26, G49, R50, N51, and N137. K138 contributes to the 1-deoxy-D-xylulose 5-phosphate binding site. E139 lines the NADPH pocket. A Mn(2+)-binding site is contributed by D163. 1-deoxy-D-xylulose 5-phosphate-binding residues include S164, E165, S199, and H222. E165 contacts Mn(2+). G228 is a binding site for NADPH. 4 residues coordinate 1-deoxy-D-xylulose 5-phosphate: S235, N240, K241, and E244. E244 contacts Mn(2+).

This sequence belongs to the DXR family. The cofactor is Mg(2+). Mn(2+) serves as cofactor.

The enzyme catalyses 2-C-methyl-D-erythritol 4-phosphate + NADP(+) = 1-deoxy-D-xylulose 5-phosphate + NADPH + H(+). The protein operates within isoprenoid biosynthesis; isopentenyl diphosphate biosynthesis via DXP pathway; isopentenyl diphosphate from 1-deoxy-D-xylulose 5-phosphate: step 1/6. Its function is as follows. Catalyzes the NADPH-dependent rearrangement and reduction of 1-deoxy-D-xylulose-5-phosphate (DXP) to 2-C-methyl-D-erythritol 4-phosphate (MEP). In Mannheimia succiniciproducens (strain KCTC 0769BP / MBEL55E), this protein is 1-deoxy-D-xylulose 5-phosphate reductoisomerase.